Consider the following 754-residue polypeptide: Phosphoribosylformylglycinamidine synthase subunit PurL (754 aa).

Residues 1-21 (MLDTVEHAATTPDQPQPYGEL) are disordered. Residue His54 is part of the active site. Residues Tyr57 and Lys101 each coordinate ATP. Mg(2+) is bound at residue Glu103. Substrate contacts are provided by residues 104–107 (SHNH) and Arg126. His105 functions as the Proton acceptor in the catalytic mechanism. A Mg(2+)-binding site is contributed by Asp127. Residue Gln252 coordinates substrate. Asp280 serves as a coordination point for Mg(2+). A substrate-binding site is contributed by 324-326 (ESQ). Residues Asn512 and Gly549 each contribute to the ATP site. Asn550 is a Mg(2+) binding site. Ser552 provides a ligand contact to substrate.

Belongs to the FGAMS family. In terms of assembly, monomer. Part of the FGAM synthase complex composed of 1 PurL, 1 PurQ and 2 PurS subunits.

Its subcellular location is the cytoplasm. The enzyme catalyses N(2)-formyl-N(1)-(5-phospho-beta-D-ribosyl)glycinamide + L-glutamine + ATP + H2O = 2-formamido-N(1)-(5-O-phospho-beta-D-ribosyl)acetamidine + L-glutamate + ADP + phosphate + H(+). The protein operates within purine metabolism; IMP biosynthesis via de novo pathway; 5-amino-1-(5-phospho-D-ribosyl)imidazole from N(2)-formyl-N(1)-(5-phospho-D-ribosyl)glycinamide: step 1/2. Its function is as follows. Part of the phosphoribosylformylglycinamidine synthase complex involved in the purines biosynthetic pathway. Catalyzes the ATP-dependent conversion of formylglycinamide ribonucleotide (FGAR) and glutamine to yield formylglycinamidine ribonucleotide (FGAM) and glutamate. The FGAM synthase complex is composed of three subunits. PurQ produces an ammonia molecule by converting glutamine to glutamate. PurL transfers the ammonia molecule to FGAR to form FGAM in an ATP-dependent manner. PurS interacts with PurQ and PurL and is thought to assist in the transfer of the ammonia molecule from PurQ to PurL. This Mycobacterium bovis (strain ATCC BAA-935 / AF2122/97) protein is Phosphoribosylformylglycinamidine synthase subunit PurL.